Consider the following 451-residue polypeptide: MIDSEALENERTKLKREIAELRAALNRKEQCLRDLETTISEATGDEDDVHPDTNGGVCHTQLSNDDIARYSRQLILPDFGVQGQLRLKNSSVLIVGMGGLGCPAAQYLAAAGCGKLGLIDYDEVERSNFHRQILHSEARCGMSKAESARIALLELNQHCEIRCHTRLLNSRNAMHIIRTYDVVLDCSDNVATRYLLNDACVMLRKPLVSGSALKTDGQLTVYCYGNGPCYRCIYPVPPPPEAVTNCGDGGVLGAVTGTIGAMQALEAIKVIVGLGDVLAGRLLIFDGSSCLFRNIRIRSKRPNCHVCSAQPLITELIDYELFCGMHATDKDNPLQLLASEERLDVEEYRNKVQQQPHLLIDVRQPAEFEICQLPDAVNVPLAEVLDDSYLKRFSKQLEDTQLPIILLCRRGNDSQIAVQHVRNRFPKHSIRDIIGGLHAWTHKVDPSFPIY.

Thr-60 is subject to Phosphothreonine. Residues Gly-99, Asp-120, 127–131 (SNFHR), Lys-144, and 188–189 (DN) contribute to the ATP site. 2 residues coordinate Zn(2+): Cys-229 and Cys-232. The Glycyl thioester intermediate; for adenylyltransferase activity role is filled by Cys-246. Residues Cys-304 and Cys-307 each coordinate Zn(2+). Residues 353-449 (QQQPHLLIDV…WTHKVDPSFP (97 aa)) form the Rhodanese domain. Catalysis depends on Cys-408, which acts as the Cysteine persulfide intermediate; for sulfurtransferase activity.

The protein in the N-terminal section; belongs to the HesA/MoeB/ThiF family. UBA4 subfamily. The cofactor is Zn(2+).

It localises to the cytoplasm. Its subcellular location is the cytosol. It catalyses the reaction [molybdopterin-synthase sulfur-carrier protein]-C-terminal Gly-Gly + ATP + H(+) = [molybdopterin-synthase sulfur-carrier protein]-C-terminal Gly-Gly-AMP + diphosphate. It carries out the reaction [molybdopterin-synthase sulfur-carrier protein]-C-terminal Gly-Gly-AMP + S-sulfanyl-L-cysteinyl-[cysteine desulfurase] + AH2 = [molybdopterin-synthase sulfur-carrier protein]-C-terminal-Gly-aminoethanethioate + L-cysteinyl-[cysteine desulfurase] + A + AMP + 2 H(+). Its pathway is tRNA modification; 5-methoxycarbonylmethyl-2-thiouridine-tRNA biosynthesis. It functions in the pathway cofactor biosynthesis; molybdopterin biosynthesis. Plays a central role in 2-thiolation of mcm(5)S(2)U at tRNA wobble positions of cytosolic tRNA(Lys), tRNA(Glu) and tRNA(Gln). Also essential during biosynthesis of the molybdenum cofactor. Acts by mediating the C-terminal thiocarboxylation of sulfur carriers URM1 and MOCS2A. Its N-terminus first activates URM1 and MOCS2A as acyl-adenylates (-COAMP), then the persulfide sulfur on the catalytic cysteine is transferred to URM1 and MOCS2A to form thiocarboxylation (-COSH) of their C-terminus. The reaction probably involves hydrogen sulfide that is generated from the persulfide intermediate and that acts as a nucleophile towards URM1 and MOCS2A. Subsequently, a transient disulfide bond is formed. Does not use thiosulfate as sulfur donor; NFS1 probably acting as a sulfur donor for thiocarboxylation reactions. The sequence is that of Adenylyltransferase and sulfurtransferase MOCS3 from Drosophila ananassae (Fruit fly).